A 115-amino-acid polypeptide reads, in one-letter code: Tyrosine-protein phosphatase 21 (115 aa).

The 115-residue stretch at W1–V115 folds into the Tyrosine-protein phosphatase domain. D83 provides a ligand contact to substrate.

It belongs to the protein-tyrosine phosphatase family.

It carries out the reaction O-phospho-L-tyrosyl-[protein] + H2O = L-tyrosyl-[protein] + phosphate. The protein is Tyrosine-protein phosphatase 21 (STY-21) of Styela plicata (Wrinkled sea squirt).